We begin with the raw amino-acid sequence, 535 residues long: Alcohol O-acetyltransferase 2 (535 aa).

The tract at residues 19-36 is membrane association; that stretch reads GHARRMGHLENYFAVLSR. Active-site charge relay system residues include His189 and Asp193. Residues 515–532 are membrane association; that stretch reads RGEWESFCKLFYQTIGEF.

Belongs to the ATF1 alcohol acetyltransferase family.

The protein localises to the lipid droplet. It is found in the endoplasmic reticulum membrane. The enzyme catalyses an aliphatic alcohol + acetyl-CoA = an acetyl ester + CoA. Can use acetyl-CoA to synthesize acetate esters from various alcohols, producing ethyl acetate, isoamyl acetate, isobutyl acetate, butyl acetate, hexyl acetate, heptyl acetate and octyl acetate. ATF2 seems to play only a minor role in the acetate ester synthesis, compared to ATF1. Plays an active role in the detoxification hydroxysteroids and possibly certain phytochemicals, in association with the efflux pumps PDR5 and SNQ2. This chain is Alcohol O-acetyltransferase 2, found in Saccharomyces cerevisiae (strain ATCC 204508 / S288c) (Baker's yeast).